Here is a 210-residue protein sequence, read N- to C-terminus: Probable nicotinate-nucleotide adenylyltransferase (210 aa).

It belongs to the NadD family.

The enzyme catalyses nicotinate beta-D-ribonucleotide + ATP + H(+) = deamido-NAD(+) + diphosphate. It functions in the pathway cofactor biosynthesis; NAD(+) biosynthesis; deamido-NAD(+) from nicotinate D-ribonucleotide: step 1/1. Catalyzes the reversible adenylation of nicotinate mononucleotide (NaMN) to nicotinic acid adenine dinucleotide (NaAD). The polypeptide is Probable nicotinate-nucleotide adenylyltransferase (Streptococcus pyogenes serotype M3 (strain ATCC BAA-595 / MGAS315)).